We begin with the raw amino-acid sequence, 448 residues long: MMDVNSSGRPDLYGHLRSLILPEVGRGLQDLSPDGGAHPVVSSWMPHLLSGFLEVTASPAPTWDAPPDNVSGCGEQINYGRVEKVVIGSILTLITLLTIAGNCLVVISVCFVKKLRQPSNYLIVSLALADLSVAVAVMPFVSVTDLIGGKWIFGHFFCNVFIAMDVMCCTASIMTLCVISIDRYLGITRPLTYPVRQNGKCMAKMILSVWLLSASITLPPLFGWAQNVNDDKVCLISQDFGYTIYSTAVAFYIPMSVMLFMYYQIYKAARKSAAKHKFPGFPRVQPESVISLNGVVKLQKEVEECANLSRLLKHERKNISIFKREQKAATTLGIIVGAFTVCWLPFFLLSTARPFICGTSCSCIPLWVERTCLWLGYANSLINPFIYAFFNRDLRTTYRSLLQCQYRNINRKLSAAGMHEALKLAERPERSEFVLQNSDHCGKKGHDT.

Residues 1–86 (MMDVNSSGRP…INYGRVEKVV (86 aa)) lie on the Extracellular side of the membrane. N-linked (GlcNAc...) asparagine glycosylation is found at Asn-5 and Asn-69. The chain crosses the membrane as a helical span at residues 87–111 (IGSILTLITLLTIAGNCLVVISVCF). The Cytoplasmic portion of the chain corresponds to 112–121 (VKKLRQPSNY). Residues 122-143 (LIVSLALADLSVAVAVMPFVSV) traverse the membrane as a helical segment. Residues 144–155 (TDLIGGKWIFGH) lie on the Extracellular side of the membrane. Residues 156–181 (FFCNVFIAMDVMCCTASIMTLCVISI) form a helical membrane-spanning segment. A disulfide bridge links Cys-158 with Cys-234. Asp-165 serves as a coordination point for serotonin. The Cytoplasmic segment spans residues 182 to 201 (DRYLGITRPLTYPVRQNGKC). A helical transmembrane segment spans residues 202–222 (MAKMILSVWLLSASITLPPLF). The Extracellular portion of the chain corresponds to 223–240 (GWAQNVNDDKVCLISQDF). A helical membrane pass occupies residues 241 to 263 (GYTIYSTAVAFYIPMSVMLFMYY). The Cytoplasmic portion of the chain corresponds to 264–329 (QIYKAARKSA…SIFKREQKAA (66 aa)). The chain crosses the membrane as a helical span at residues 330-355 (TTLGIIVGAFTVCWLPFFLLSTARPF). At 356 to 366 (ICGTSCSCIPL) the chain is on the extracellular side. A helical membrane pass occupies residues 367-390 (WVERTCLWLGYANSLINPFIYAFF). The Cytoplasmic portion of the chain corresponds to 391–448 (NRDLRTTYRSLLQCQYRNINRKLSAAGMHEALKLAERPERSEFVLQNSDHCGKKGHDT). Cys-404 carries the S-palmitoyl cysteine lipid modification.

This sequence belongs to the G-protein coupled receptor 1 family. As to expression, thalamus, hypothalamus, and the hippocampal rudiments.

It is found in the cell membrane. Its function is as follows. G-protein coupled receptor for 5-hydroxytryptamine (serotonin), a biogenic hormone that functions as a neurotransmitter, a hormone and a mitogen. Ligand binding causes a conformation change that triggers signaling via guanine nucleotide-binding proteins (G proteins) and modulates the activity of downstream effectors. HTR7 is coupled to G(s) G alpha proteins and mediates activation of adenylate cyclase activity. The chain is 5-hydroxytryptamine receptor 7 from Rattus norvegicus (Rat).